We begin with the raw amino-acid sequence, 930 residues long: MSKKRLYEIAKELGKESKEVVARAKELGLDVKSHSSSVEEAVAAKIAASFKPAAAPKVEAKPAAPKVSAEKKAEKSEPAKPAVAKEEAKPAEPVAPKTEKVAAKPQSRNFKAEREARAKEQAERRKQNKGNNRDQQQNGNRQKNDGRNGGKQGQSNRDNRRFNDQAKKQQGQQKRRNERRQQEDKRSNQAAPRIDFKARAAALKAEQNAEYARSSEERFKQYQAAKEALAQANKRKEPEEIFEEAAKLAEQAQQVQAVVEVVPEKKEPAVDTRRKKQARPDKNRDDYDHEEDGPRKQQKNRSSQNQVRNQKNSNWNNNKKNKKGNNKNNRNQTPKPVTERKFHELPTEFEYTDGMTVAEIAKRIKREPAEIVKKLFMMGVMATQNQSLDGETIELLMVDYGIEAKQKVEVDNADIERFFVEDGYLNEDELVERPPVVTIMGHVDHGKTTLLDTLRNSRVATGEAGGITQHIGAYQIVENGKKITFLDTPGHAAFTSMRARGASVTDITILVVAADDGVMPQTIEAINHSKAANVPIIVAINKIDKPGANPERVIGELAEHGVMSTAWGGDSEFVEISAKFNQNIEELLETVLLVAEIQELKADPTVRAIGTVIEARLDKGKGAVATLLVQQGTLNVQDPIVVGNTFGRVRAMTNDLGRRVKVAGPSTPVSITGLNEAPMAGDHFAVYEDEKSARAAGEERAKRALMKQRQATQRVSLENLFDTLKAGELKSVNVIIKADVQGSVEALSASLQKIDVEGVKVTIVHSAVGAINESDVTLAEASNAFIVGFNVRPTPQARQQAEADDVEIRLHSIIYKVIEEMEEAMKGMLDPEFEEKVIGEAVIRETFKVSKVGTIGGFMVINGKVARDSKVRVIRDGVVIYDGELASLKHYKDDVKEVTNGREGGLMIDGYNDIKMDDVIEAYVMEEIKR.

The span at 50 to 67 (FKPAAAPKVEAKPAAPKV) shows a compositional bias: low complexity. 2 disordered regions span residues 50–217 (FKPA…SSEE) and 260–346 (EVVP…HELP). Composition is skewed to basic and acidic residues over residues 68 to 90 (SAEK…EAKP) and 110 to 125 (FKAE…AERR). Over residues 129–141 (KGNNRDQQQNGNR) the composition is skewed to low complexity. Composition is skewed to basic and acidic residues over residues 157–167 (RDNRRFNDQAK) and 262–295 (VPEK…DGPR). The segment covering 309 to 318 (NQKNSNWNNN) has biased composition (low complexity). Residues 337–346 (VTERKFHELP) are compositionally biased toward basic and acidic residues. A tr-type G domain is found at 432–599 (ERPPVVTIMG…TVLLVAEIQE (168 aa)). Positions 441-448 (GHVDHGKT) are G1. 441–448 (GHVDHGKT) lines the GTP pocket. The interval 466–470 (GITQH) is G2. The segment at 487–490 (DTPG) is G3. Residues 487 to 491 (DTPGH) and 541 to 544 (NKID) contribute to the GTP site. The tract at residues 541–544 (NKID) is G4. The tract at residues 577–579 (SAK) is G5.

It belongs to the TRAFAC class translation factor GTPase superfamily. Classic translation factor GTPase family. IF-2 subfamily.

It localises to the cytoplasm. One of the essential components for the initiation of protein synthesis. Protects formylmethionyl-tRNA from spontaneous hydrolysis and promotes its binding to the 30S ribosomal subunits. Also involved in the hydrolysis of GTP during the formation of the 70S ribosomal complex. In Streptococcus pneumoniae (strain Taiwan19F-14), this protein is Translation initiation factor IF-2.